The following is a 124-amino-acid chain: Small ribosomal subunit protein uS12 (124 aa).

Asp89 carries the 3-methylthioaspartic acid modification.

The protein belongs to the universal ribosomal protein uS12 family. In terms of assembly, part of the 30S ribosomal subunit. Contacts proteins S8 and S17. May interact with IF1 in the 30S initiation complex.

Functionally, with S4 and S5 plays an important role in translational accuracy. In terms of biological role, interacts with and stabilizes bases of the 16S rRNA that are involved in tRNA selection in the A site and with the mRNA backbone. Located at the interface of the 30S and 50S subunits, it traverses the body of the 30S subunit contacting proteins on the other side and probably holding the rRNA structure together. The combined cluster of proteins S8, S12 and S17 appears to hold together the shoulder and platform of the 30S subunit. The polypeptide is Small ribosomal subunit protein uS12 (Aeromonas hydrophila subsp. hydrophila (strain ATCC 7966 / DSM 30187 / BCRC 13018 / CCUG 14551 / JCM 1027 / KCTC 2358 / NCIMB 9240 / NCTC 8049)).